We begin with the raw amino-acid sequence, 213 residues long: Putative 3-methyladenine DNA glycosylase (213 aa).

Belongs to the DNA glycosylase MPG family.

This chain is Putative 3-methyladenine DNA glycosylase, found in Leifsonia xyli subsp. xyli (strain CTCB07).